Reading from the N-terminus, the 322-residue chain is MKQFNEFYQKIATNRLGHWLNTLPAQLSHWHESELHGEFKHWQKTLDALPVVDANSAIDITNTVKVGESGDLDQGQFKRLENLMKKFKPWRKGPYHIHGLHIDTEWRSDFKWDRLAEHISDLSGKYVLDIGCGSGYHLWRMRGAGAKFVVGIDPTQLFLMQFNAIKHFIDDSPVHLLPLGVEQLPELKAFDTVFAMGVLYHRRSPIDFLYQLKAQLVKGGELVLETLIVDGDENTVLVPGERYAKMRNVWFLPSEKAMCAWLERCGFNNVRVVNTDITALDEQRKTEWIDTESLQDFLDPNDSSKTIEGYPAPKRAIFIANA.

Carboxy-S-adenosyl-L-methionine contacts are provided by residues Lys-92, Trp-106, Lys-111, Gly-131, Asp-153 to Thr-155, Val-181 to Glu-182, Met-196, Tyr-200, and Arg-315.

Belongs to the class I-like SAM-binding methyltransferase superfamily. CmoB family. In terms of assembly, homotetramer.

The catalysed reaction is carboxy-S-adenosyl-L-methionine + 5-hydroxyuridine(34) in tRNA = 5-carboxymethoxyuridine(34) in tRNA + S-adenosyl-L-homocysteine + H(+). In terms of biological role, catalyzes carboxymethyl transfer from carboxy-S-adenosyl-L-methionine (Cx-SAM) to 5-hydroxyuridine (ho5U) to form 5-carboxymethoxyuridine (cmo5U) at position 34 in tRNAs. The sequence is that of tRNA U34 carboxymethyltransferase from Colwellia psychrerythraea (strain 34H / ATCC BAA-681) (Vibrio psychroerythus).